We begin with the raw amino-acid sequence, 238 residues long: Ribonuclease PH (238 aa).

Residues arginine 86 and 124–126 contribute to the phosphate site; that span reads GTR.

The protein belongs to the RNase PH family. Homohexameric ring arranged as a trimer of dimers.

The enzyme catalyses tRNA(n+1) + phosphate = tRNA(n) + a ribonucleoside 5'-diphosphate. In terms of biological role, phosphorolytic 3'-5' exoribonuclease that plays an important role in tRNA 3'-end maturation. Removes nucleotide residues following the 3'-CCA terminus of tRNAs; can also add nucleotides to the ends of RNA molecules by using nucleoside diphosphates as substrates, but this may not be physiologically important. Probably plays a role in initiation of 16S rRNA degradation (leading to ribosome degradation) during starvation. The chain is Ribonuclease PH from Yersinia pseudotuberculosis serotype O:1b (strain IP 31758).